A 57-amino-acid polypeptide reads, in one-letter code: UPF0391 membrane protein Arad_3976 (57 aa).

The next 2 membrane-spanning stretches (helical) occupy residues 4–24 (WAII…SGVS) and 33–53 (VLFA…VMAG).

Belongs to the UPF0391 family.

It localises to the cell membrane. In Rhizobium rhizogenes (strain K84 / ATCC BAA-868) (Agrobacterium radiobacter), this protein is UPF0391 membrane protein Arad_3976.